We begin with the raw amino-acid sequence, 214 residues long: cAMP-activated global transcriptional regulator Vfr (214 aa).

Residues 59-60 (RE), 73-75 (GEL), 87-88 (RS), 132-133 (TT), Arg-179, and Arg-185 contribute to the 3',5'-cyclic AMP site. The HTH crp-type domain occupies 142–214 (LDVTGRVART…GKTMVVFGTR (73 aa)). The segment at residues 174-193 (RQEIGRIVGCSREMVGRVLK) is a DNA-binding region (H-T-H motif).

As to quaternary structure, homodimer.

Global cAMP-dependent transcriptional regulator that controls virulence gene expression by distinct cAMP-dependent and -independent mechanisms, which allow to fine tune its virulence program in response to specific host cues or environments. Controls the expression of many regulatory targets including type II, type III and type IV secretion systems, flagellar-mediated motility, and quorum sensing systems. Transcriptional control is exerted by binding to a well-characterized consensus site (5'-ANWWTGNGAWNYAGWTCACAT) within target promoters. Directly binds to the toxA upstream region to regulate exotoxin A production, to the lasR gene promoter to activate the las quorum-sensing system or to the exsA promoter to regulate type III secretion system. Autoregulates as well its own expression. The sequence is that of cAMP-activated global transcriptional regulator Vfr (vfr) from Pseudomonas aeruginosa (strain ATCC 15692 / DSM 22644 / CIP 104116 / JCM 14847 / LMG 12228 / 1C / PRS 101 / PAO1).